The sequence spans 431 residues: Tol-Pal system protein TolB (431 aa).

The first 26 residues, 1-26 (MRLMTKLGFRALVASCLIAAGGAANA), serve as a signal peptide directing secretion. The interval 411–431 (PQILSVQGGSVREPSWGPFMQ) is disordered.

It belongs to the TolB family. The Tol-Pal system is composed of five core proteins: the inner membrane proteins TolA, TolQ and TolR, the periplasmic protein TolB and the outer membrane protein Pal. They form a network linking the inner and outer membranes and the peptidoglycan layer.

The protein localises to the periplasm. Its function is as follows. Part of the Tol-Pal system, which plays a role in outer membrane invagination during cell division and is important for maintaining outer membrane integrity. In Burkholderia ambifaria (strain MC40-6), this protein is Tol-Pal system protein TolB.